The following is a 460-amino-acid chain: GTPase Der (460 aa).

EngA-type G domains lie at 2 to 166 (KTIA…AEER) and 175 to 353 (TRIA…QERK). Residues 8-15 (GRPNVGKS), 55-59 (DTGGL), 118-121 (NKLD), 181-188 (GQPNAGKS), 228-232 (DTAGL), and 293-296 (NKID) contribute to the GTP site. The 93-residue stretch at 354–446 (KRIPTHRLTQ…LLWKWRKAEG (93 aa)) folds into the KH-like domain.

This sequence belongs to the TRAFAC class TrmE-Era-EngA-EngB-Septin-like GTPase superfamily. EngA (Der) GTPase family. Associates with the 50S ribosomal subunit.

Functionally, GTPase that plays an essential role in the late steps of ribosome biogenesis. This is GTPase Der from Methylacidiphilum infernorum (isolate V4) (Methylokorus infernorum (strain V4)).